The sequence spans 419 residues: tRNA(Met) cytidine acetate ligase (419 aa).

Residues 7 to 20 (ITEYNPFHNGHLHH), G101, N163, and R188 contribute to the ATP site.

This sequence belongs to the TmcAL family.

It localises to the cytoplasm. The catalysed reaction is cytidine(34) in elongator tRNA(Met) + acetate + ATP = N(4)-acetylcytidine(34) in elongator tRNA(Met) + AMP + diphosphate. In terms of biological role, catalyzes the formation of N(4)-acetylcytidine (ac(4)C) at the wobble position of elongator tRNA(Met), using acetate and ATP as substrates. First activates an acetate ion to form acetyladenylate (Ac-AMP) and then transfers the acetyl group to tRNA to form ac(4)C34. This chain is tRNA(Met) cytidine acetate ligase, found in Syntrophotalea carbinolica (strain DSM 2380 / NBRC 103641 / GraBd1) (Pelobacter carbinolicus).